A 210-amino-acid chain; its full sequence is Ribosomal RNA large subunit methyltransferase E (210 aa).

Positions 64, 66, 84, 100, and 125 each coordinate S-adenosyl-L-methionine. Lys165 serves as the catalytic Proton acceptor.

It belongs to the class I-like SAM-binding methyltransferase superfamily. RNA methyltransferase RlmE family.

Its subcellular location is the cytoplasm. It carries out the reaction uridine(2552) in 23S rRNA + S-adenosyl-L-methionine = 2'-O-methyluridine(2552) in 23S rRNA + S-adenosyl-L-homocysteine + H(+). Functionally, specifically methylates the uridine in position 2552 of 23S rRNA at the 2'-O position of the ribose in the fully assembled 50S ribosomal subunit. The sequence is that of Ribosomal RNA large subunit methyltransferase E from Buchnera aphidicola subsp. Baizongia pistaciae (strain Bp).